The sequence spans 461 residues: Cysteine--tRNA ligase (461 aa).

Cysteine 28 lines the Zn(2+) pocket. A 'HIGH' region motif is present at residues 30 to 40 (MTVYDYCHLGH). Zn(2+)-binding residues include cysteine 212, histidine 237, and glutamate 241. Residues 269–273 (KMSKS) carry the 'KMSKS' region motif. Position 272 (lysine 272) interacts with ATP.

This sequence belongs to the class-I aminoacyl-tRNA synthetase family. Monomer. Zn(2+) is required as a cofactor.

The protein resides in the cytoplasm. It catalyses the reaction tRNA(Cys) + L-cysteine + ATP = L-cysteinyl-tRNA(Cys) + AMP + diphosphate. This chain is Cysteine--tRNA ligase, found in Aromatoleum aromaticum (strain DSM 19018 / LMG 30748 / EbN1) (Azoarcus sp. (strain EbN1)).